The following is a 486-amino-acid chain: Probable peptidoglycan glycosyltransferase FtsW (486 aa).

Over 1 to 50 the chain is Cytoplasmic; it reads MAGAARDRAFLDHFGGAGADRPCHVEGALMNDMSRQATRLDAIGGRYDPW. A helical transmembrane segment spans residues 51–71; that stretch reads LLGAAVTLASLGVVMVASSSI. At 72 to 77 the chain is on the periplasmic side; sequence ELEASP. Residues 78-98 traverse the membrane as a helical segment; that stretch reads FYYLTRHLLFLGGGIALAFWA. Over 99–112 the chain is Cytoplasmic; the sequence is MRTELKTIEQHNQM. The chain crosses the membrane as a helical span at residues 113-133; that stretch reads LLLACFVLLVVVFVPGLGSTV. The Periplasmic portion of the chain corresponds to 134 to 141; sequence NGAKRWIN. Residues 142–162 form a helical membrane-spanning segment; sequence LGVSRFQVVESVKVFYIIWLA. The Cytoplasmic segment spans residues 163-174; that stretch reads SYLVRFRDEVNA. A helical transmembrane segment spans residues 175–195; it reads TWQAMLKPVFVVGLLVGLLLL. The Periplasmic portion of the chain corresponds to 196–199; sequence QPDF. A helical membrane pass occupies residues 200–220; that stretch reads GSSMLLLSVTACMLVLGGAPI. The Cytoplasmic segment spans residues 221–222; it reads GR. Residues 223 to 243 form a helical membrane-spanning segment; the sequence is IILPILLLLPALVALVIFEPY. At 244–298 the chain is on the periplasmic side; it reads RMRRVTSFMDPWVDQLGSGYQLSNALMAIGRGQWTGVGLGASVQKLNYLPESHTD. A helical membrane pass occupies residues 299 to 319; it reads FIFSVIAEELGFVGVCGVIGL. Residues 320-342 lie on the Cytoplasmic side of the membrane; sequence YALLVGRAFWLGMRCVEMKRHFS. A helical membrane pass occupies residues 343 to 363; the sequence is GYIAFGIGLWIAMQSFVSIGV. Topologically, residues 364–374 are periplasmic; it reads NLGILPTKGLT. The helical transmembrane segment at 375 to 395 threads the bilayer; the sequence is LPLISSGGSSVLMTCLAMGVL. The Cytoplasmic portion of the chain corresponds to 396 to 486; the sequence is LRVSYEADRA…RVEPTFGRIA (91 aa).

The protein belongs to the SEDS family. FtsW subfamily.

The protein localises to the cell inner membrane. It carries out the reaction [GlcNAc-(1-&gt;4)-Mur2Ac(oyl-L-Ala-gamma-D-Glu-L-Lys-D-Ala-D-Ala)](n)-di-trans,octa-cis-undecaprenyl diphosphate + beta-D-GlcNAc-(1-&gt;4)-Mur2Ac(oyl-L-Ala-gamma-D-Glu-L-Lys-D-Ala-D-Ala)-di-trans,octa-cis-undecaprenyl diphosphate = [GlcNAc-(1-&gt;4)-Mur2Ac(oyl-L-Ala-gamma-D-Glu-L-Lys-D-Ala-D-Ala)](n+1)-di-trans,octa-cis-undecaprenyl diphosphate + di-trans,octa-cis-undecaprenyl diphosphate + H(+). It functions in the pathway cell wall biogenesis; peptidoglycan biosynthesis. Functionally, peptidoglycan polymerase that is essential for cell division. In Xanthomonas oryzae pv. oryzae (strain KACC10331 / KXO85), this protein is Probable peptidoglycan glycosyltransferase FtsW.